Here is a 1449-residue protein sequence, read N- to C-terminus: MSDQESASLREEKNEIINGMGSGAPSDEEEGEDVFDSSEEEEEDDEDEARKISEGFIVNDEDEDEDEDDENVADKKKKRRHKRRAREEEDDRLSEDDLDLLMENAGVKRPTTEGSSGGKLKRLKRVGDEVESGAADREQESSQEKESSRLNDFFSDDEDEEPYDEENRERSRGSREYDRGESNHQGDNRKSGMLDELDDFIEEDEFSDEDEETRQQRLLERKMMREQRMKAPTKITGLSSDKIDEMYDVFGDGHDYDWALEIENEELEGGDINEQSEEFDEETGMTKSSKKKISLQDIYDLQDLKKNLMTDEDMLIRKTDIPERYQELRSGLVNHGNLSDNDQELEKNWISEKIAVDKNFSADYDLTEFKEAVGNAIKFITKENLEVPFIYAYRRNYISSRERDGFLLTEDDLWEIVHLDIEFQSIINKRDYVKRFYSELGISDPLVDEYFKNQSTGSVAELNSLQDIYNYLEFKYAQEINDNLQKESDKSGKKHLKNSNYEKFKSSALYKVIEAVGVSADQIGNNISSQHQIHIPKDHEALKPLELIELVLNENAGDLQVFLSNIKLAMDTIQKYYSWEISKNTKVREKVRADFYRYYLVDVVLTTKGKREIQRGSLYEDIKYAINRTPLHFRREPEIFLKMLEAESLNLMTLKLHMSSQKQYVDHLFQIALETTNTSDLAIEWNNFRKAAFTQAIEKIFNDIAQEIKDDLEKTCQKLVCKVVRHKFMTKLDQAPYVPDLKDPKLPKILTLTCGQGRFGSDAIIAAYVNRKGEFVRDFKITENPFDRSNPDKFEEVFEDIVQTCQITAIGINGPNPKTQKLFKKLIEVIHKKNLVDSKGTHIPIIYVEDEIAIRYQNSERAAQEFPNKPPYVKYCIALARYMHSPLMEYANLSPEELKSLSIHPFQSFLSPEYLNRAIETAFVDIVNLVGVEVNKATDNSYYASVLRFVSGFGKRKAIDFLESLQRLNEPLLARQQLITHNILHKVIFMNSAGFLYISWSKKRQRYEDLEHDQLDSTRIHPEDYHLATKVAADALEYDPDTIAEKEENGTMSEFIEFLREDPNRRSKLESLNLESYAEELEKNTGQRKLNNLNTIVLELLDGFEELRNDFHIMQSEEVFSSLTGETDKTLFKGCVIPVRVERFWHNDIVCVTNSEVECIVNAQRHLGAQVRRPPNEIYELNKTYPAKVIFIDYPNITAEVSLLEHDVKNEYNPLTYSKDPAIWDLKQELEDSEEEKKVTMAESRAKRTHRVINHPYYFPFNGKQAEDYLRSKERGDFVIRQSSRGDDHLAITWKLDKDLFQHVDIQELEKENPLALGKVLVVEGQRYHDLDQIIVEYLQNKIRLLNELTSNEKFKAGTKKEVVKFIEDYSKVNPKKSVYYFSLNYENPGWFYLIFKLNAESKLYIWNVKLTHTGFFLVNYNYPTVIQLCNGFKTLLKSSNTRNRSGYR.

The interval 1–214 is disordered; the sequence is MSDQESASLR…EFSDEDEETR (214 aa). 2 stretches are compositionally biased toward acidic residues: residues 26-47 and 59-71; these read SDEE…DDED and NDED…DDEN. Residues 75 to 84 show a composition bias toward basic residues; the sequence is KKKKRRHKRR. The segment covering 88–100 has biased composition (acidic residues); that stretch reads EEDDRLSEDDLDL. Residues 134 to 149 show a composition bias toward basic and acidic residues; sequence AADREQESSQEKESSR. Residues 154–164 are compositionally biased toward acidic residues; it reads FSDDEDEEPYD. Residues 165 to 193 show a composition bias toward basic and acidic residues; it reads EENRERSRGSREYDRGESNHQGDNRKSGM. The span at 195–212 shows a compositional bias: acidic residues; sequence DELDDFIEEDEFSDEDEE. The SH2 domain occupies 1256 to 1353; sequence PYYFPFNGKQ…RLLNELTSNE (98 aa).

Belongs to the SPT6 family.

It localises to the nucleus. Its subcellular location is the chromosome. Histone H3-H4 chaperone that plays a role in maintenance of chromatin structure during RNA polymerase II transcription elongation thereby repressing transcription initiation from cryptic promoters. Mediates the reassembly of nucleosomes onto the promoters of at least a selected set of genes during repression; the nucleosome reassembly is essential for transcriptional repression. Essential for viability. The polypeptide is Transcription elongation factor SPT6 (SPT6) (Candida glabrata (strain ATCC 2001 / BCRC 20586 / JCM 3761 / NBRC 0622 / NRRL Y-65 / CBS 138) (Yeast)).